Reading from the N-terminus, the 225-residue chain is Superantigen-like protein 11 (225 aa).

The signal sequence occupies residues 1-30 (MKLKNIAKASLALGILTTGMITTTAQPVKA). Residues 94 to 196 (VDIFVVRENS…RITMKDGGFY (103 aa)) are sialyl Lewis X-binding.

It belongs to the staphylococcal/streptococcal toxin family. In terms of assembly, homodimer (via its C-terminal domain). Interacts with host FCAR and SELPLG (via sialyl Lewis X).

Its subcellular location is the secreted. Secreted protein that plays a role in the inhibition of host immune system. Targets myeloid cells such as monocytes or granulocytes through binding with sialyllactosamine-containing glycoproteins. Prevents initial rolling of neutrophils toward the site of infection by interacting with host SELPLG. Disrupts neutrophil motility by induction of cell adhesion via interacting with glycans but independently of SELPLG. The polypeptide is Superantigen-like protein 11 (Staphylococcus aureus (strain Newman)).